Consider the following 765-residue polypeptide: ATP-dependent RNA helicase DBP4 (765 aa).

The short motif at 48–76 is the Q motif element; that stretch reads SQFSDLPITENTLKGLKEATFVSLTDIQK. Residues 79–253 form the Helicase ATP-binding domain; sequence IPIALKGEDL…RLSLTNPNKI (175 aa). 92 to 99 contributes to the ATP binding site; sequence ARTGSGKT. The DEAD box motif lies at 201–204; sequence DEAD. The 173-residue stretch at 267-439 folds into the Helicase C-terminal domain; that stretch reads SLEQYYVKVP…SIRPQLQSLC (173 aa). 2 stretches are compositionally biased toward basic and acidic residues: residues 655 to 668 and 720 to 738; these read KISD…ERQK and PVSK…KSKN. A disordered region spans residues 655–765; sequence KISDITDKEV…ESLTARLIGN (111 aa). Positions 744-756 are enriched in acidic residues; sequence VEYDEPETLEDLE.

This sequence belongs to the DEAD box helicase family. DDX10/DBP4 subfamily. As to quaternary structure, interacts with the U3 and U14 snoRNAs. Associates with pre-ribosomal complexes.

The protein localises to the nucleus. It localises to the nucleolus. It catalyses the reaction ATP + H2O = ADP + phosphate + H(+). In terms of biological role, ATP-dependent RNA helicase required for ribosome biogenesis. Involved in the release of U14 snoRNA in pre-ribosomal complexes. Required for pre-rRNA cleavage at site A2. This Candida albicans (strain SC5314 / ATCC MYA-2876) (Yeast) protein is ATP-dependent RNA helicase DBP4 (DBP4).